We begin with the raw amino-acid sequence, 151 residues long: Protein InSETG-4 (151 aa).

It is found in the cytoplasm. The protein localises to the cytosol. The chain is Protein InSETG-4 (InSet4-G) from Homo sapiens (Human).